Reading from the N-terminus, the 63-residue chain is Large ribosomal subunit protein bL28 (63 aa).

This sequence belongs to the bacterial ribosomal protein bL28 family.

The chain is Large ribosomal subunit protein bL28 from Hydrogenobaculum sp. (strain Y04AAS1).